The chain runs to 101 residues: Transcription factor ILI2 (101 aa).

A disordered region spans residues 1–22 (MSSSRRSRTSSRLAAAPPPTDE). The region spanning 8 to 63 (RTSSRLAAAPPPTDEQMAELISKLQAVLPTRGGEANAKQASSAEVLQEACRYIRRL) is the bHLH domain.

This sequence belongs to the bHLH protein family.

Functionally, atypical and probable non DNA-binding bHLH transcription factor that integrates multiple signaling pathways to regulate cell elongation and plant development. This Oryza sativa subsp. indica (Rice) protein is Transcription factor ILI2 (ILI2).